The primary structure comprises 198 residues: UPF0314 protein Saro_1818 (198 aa).

5 helical membrane-spanning segments follow: residues 13 to 33 (GGSLAAFGVGLAVVIILLGMG), 62 to 82 (WYSFSHLIHGFLFYGAAHIVW), 96 to 116 (LALAVLIEGSWEILENSPIII), 153 to 173 (APVLVTVVLGIGFELFTLWAI), and 177 to 197 (LALNILMLVWPVEAVRVWQGG).

The protein belongs to the UPF0314 family.

Its subcellular location is the cell membrane. The polypeptide is UPF0314 protein Saro_1818 (Novosphingobium aromaticivorans (strain ATCC 700278 / DSM 12444 / CCUG 56034 / CIP 105152 / NBRC 16084 / F199)).